Consider the following 235-residue polypeptide: 2-C-methyl-D-erythritol 4-phosphate cytidylyltransferase (235 aa).

Belongs to the IspD/TarI cytidylyltransferase family. IspD subfamily.

It catalyses the reaction 2-C-methyl-D-erythritol 4-phosphate + CTP + H(+) = 4-CDP-2-C-methyl-D-erythritol + diphosphate. It functions in the pathway isoprenoid biosynthesis; isopentenyl diphosphate biosynthesis via DXP pathway; isopentenyl diphosphate from 1-deoxy-D-xylulose 5-phosphate: step 2/6. Functionally, catalyzes the formation of 4-diphosphocytidyl-2-C-methyl-D-erythritol from CTP and 2-C-methyl-D-erythritol 4-phosphate (MEP). The sequence is that of 2-C-methyl-D-erythritol 4-phosphate cytidylyltransferase from Pseudomonas putida (strain ATCC 700007 / DSM 6899 / JCM 31910 / BCRC 17059 / LMG 24140 / F1).